A 257-amino-acid polypeptide reads, in one-letter code: MNPLIIKLGGVLLDSEEALERLFTALVNYRESHQRPLVIVHGGGCVVDELMKGLNLPVKKKDGLRVTPADQIGIITGALAGTANKTLLAWAKKHHIASVGLFLGDGDSVKVTQLDEALGHVGLAQPGSPKLINMLLENGFLPVVSSIGVTDDGQLMNVNADQAATALAATLGADLILLSDVSGILDGKGQRIAEMTASKAEQLIDQGIITDGMIVKVNAALDAARALGRPVDIASWRHAEQLPALFNGTPIGTRILA.

Substrate contacts are provided by residues Gly43–Gly44, Arg65, and Asn157. Residues Asp180–Leu185 and Ile208–Thr210 each bind ATP.

The protein belongs to the acetylglutamate kinase family. ArgB subfamily. As to quaternary structure, homodimer.

It localises to the cytoplasm. The catalysed reaction is N-acetyl-L-glutamate + ATP = N-acetyl-L-glutamyl 5-phosphate + ADP. The protein operates within amino-acid biosynthesis; L-arginine biosynthesis; N(2)-acetyl-L-ornithine from L-glutamate: step 2/4. Its function is as follows. Catalyzes the ATP-dependent phosphorylation of N-acetyl-L-glutamate. This chain is Acetylglutamate kinase, found in Salmonella schwarzengrund (strain CVM19633).